We begin with the raw amino-acid sequence, 418 residues long: Pigment epithelium-derived factor (418 aa).

The first 19 residues, 1-19 (MQALVLLLCIGALLGHSSC), serve as a signal peptide directing secretion. Gln20 carries the pyrrolidone carboxylic acid modification. Residues 20-39 (QNPASPPEEGSPDPDSTGAL) are disordered. Residues Ser24 and Ser114 each carry the phosphoserine; by CK2 modification. The residue at position 227 (Ser227) is a Phosphoserine; by PKA. N-linked (GlcNAc...) (complex) asparagine glycosylation occurs at Asn285. The segment at 371–383 (TTPSPGLQPAHLT) is O-glycosylated at one site.

This sequence belongs to the serpin family. Interacts with PNPLA2; this interaction stimulates the phospholipase A2 activity of PNPLA2. In terms of processing, the N-terminus is blocked. Extracellular phosphorylation enhances antiangiogenic activity. N- and O-glycosylated. O-glycosylated with a core 1 or possibly core 8 glycan. In terms of tissue distribution, retinal pigment epithelial cells and blood plasma.

The protein localises to the secreted. Its subcellular location is the melanosome. In terms of biological role, neurotrophic protein; induces extensive neuronal differentiation in retinoblastoma cells. Potent inhibitor of angiogenesis. As it does not undergo the S (stressed) to R (relaxed) conformational transition characteristic of active serpins, it exhibits no serine protease inhibitory activity. The protein is Pigment epithelium-derived factor (SERPINF1) of Homo sapiens (Human).